Here is a 442-residue protein sequence, read N- to C-terminus: GTPase Obg (442 aa).

Positions 1-158 (MFYDQARIFV…HWLELELKLL (158 aa)) constitute an Obg domain. One can recognise an OBG-type G domain in the interval 159–329 (ADVGLVGFPN…LIYHVHKGLE (171 aa)). GTP-binding positions include 165–172 (GFPNVGKS), 190–194 (FTTLE), 212–215 (DIPG), 282–285 (NKMD), and 310–312 (SAA). Mg(2+) contacts are provided by Ser-172 and Thr-192. In terms of domain architecture, OCT spans 349–427 (FTGKTEERFK…IGDLDFDFIE (79 aa)).

It belongs to the TRAFAC class OBG-HflX-like GTPase superfamily. OBG GTPase family. Monomer. Requires Mg(2+) as cofactor.

It localises to the cytoplasm. Its function is as follows. An essential GTPase which binds GTP, GDP and possibly (p)ppGpp with moderate affinity, with high nucleotide exchange rates and a fairly low GTP hydrolysis rate. Plays a role in control of the cell cycle, stress response, ribosome biogenesis and in those bacteria that undergo differentiation, in morphogenesis control. This chain is GTPase Obg, found in Heliobacterium modesticaldum (strain ATCC 51547 / Ice1).